The following is a 616-amino-acid chain: Chaperone protein HscA homolog (616 aa).

This sequence belongs to the heat shock protein 70 family.

Functionally, chaperone involved in the maturation of iron-sulfur cluster-containing proteins. Has a low intrinsic ATPase activity which is markedly stimulated by HscB. This is Chaperone protein HscA homolog from Vibrio atlanticus (strain LGP32) (Vibrio splendidus (strain Mel32)).